A 506-amino-acid chain; its full sequence is Methylthioalkylmalate synthase 2, chloroplastic (506 aa).

The N-terminal 49 residues, 1 to 49 (MASSLLTSSGMIPTTGSTVVGRSVLPFQSSLHSLRLTHSYKNPALFISC), are a transit peptide targeting the chloroplast. A Pyruvate carboxyltransferase domain is found at 85–359 (VRVFDTTLRD…YTRIDTRQIM (275 aa)).

It belongs to the alpha-IPM synthase/homocitrate synthase family.

The protein localises to the plastid. Its subcellular location is the chloroplast. The enzyme catalyses an omega-(methylsulfanyl)-2-oxoalkanoate + acetyl-CoA + H2O = a 2-(omega-methylsulfanyl)alkylmalate + CoA + H(+). In terms of biological role, catalyzes only the first methionine chain elongation cycle. This is Methylthioalkylmalate synthase 2, chloroplastic (MAM2) from Arabidopsis thaliana (Mouse-ear cress).